The primary structure comprises 368 residues: Peptide chain release factor 2 (368 aa).

Residue Gln-250 is modified to N5-methylglutamine.

It belongs to the prokaryotic/mitochondrial release factor family. Post-translationally, methylated by PrmC. Methylation increases the termination efficiency of RF2.

It is found in the cytoplasm. Peptide chain release factor 2 directs the termination of translation in response to the peptide chain termination codons UGA and UAA. This Mycolicibacterium vanbaalenii (strain DSM 7251 / JCM 13017 / BCRC 16820 / KCTC 9966 / NRRL B-24157 / PYR-1) (Mycobacterium vanbaalenii) protein is Peptide chain release factor 2.